The sequence spans 183 residues: Macro domain-containing protein (183 aa).

The Macro domain occupies 1–174 (MKKVHLIQAD…IYKNILSNID (174 aa)).

It belongs to the MacroD-type family.

In Acinetobacter sp. (strain ED45-25), this protein is Macro domain-containing protein.